The chain runs to 337 residues: tRNA N6-adenosine threonylcarbamoyltransferase (337 aa).

2 residues coordinate Fe cation: H111 and H115. Residues 134–138, D167, G180, and N272 each bind substrate; that span reads LVSGG. D300 is a binding site for Fe cation.

The protein belongs to the KAE1 / TsaD family. The cofactor is Fe(2+).

The protein resides in the cytoplasm. It catalyses the reaction L-threonylcarbamoyladenylate + adenosine(37) in tRNA = N(6)-L-threonylcarbamoyladenosine(37) in tRNA + AMP + H(+). In terms of biological role, required for the formation of a threonylcarbamoyl group on adenosine at position 37 (t(6)A37) in tRNAs that read codons beginning with adenine. Is involved in the transfer of the threonylcarbamoyl moiety of threonylcarbamoyl-AMP (TC-AMP) to the N6 group of A37, together with TsaE and TsaB. TsaD likely plays a direct catalytic role in this reaction. This chain is tRNA N6-adenosine threonylcarbamoyltransferase, found in Yersinia enterocolitica serotype O:8 / biotype 1B (strain NCTC 13174 / 8081).